Reading from the N-terminus, the 330-residue chain is MVKSTPCITIDFMNMSQLTERTFTPSESLSSLSLFLSLARGQCRPGKFWHRRSFRQKFLLRSLIMPRLSVEWMNELSHWPNLNVLLTRQPRLPVRLHRPYLAANLSRKQLLEALRYHYALLRECMSAEEFSLYLNTPGLQLAKLEGKNGEQFTLELTMMISMDKEGDSTILFRNSEGIPLAEITFTLCEYQGKRTMFIGGLQGAKWEIPHQEIQNATKACHGLFPKRLVMEAACLFAQRLQVEQIIAVSNETHIYRSLRYRDKEGKIHADYNAFWESVGGVCDAERHYRLPAQIARKEIAEIASKKRAEYRRRYEMLDAIQPQMATMFRG.

It to H.influenzae HI_0461.

This is an uncharacterized protein from Escherichia coli (strain K12).